The following is a 689-amino-acid chain: Glycine--tRNA ligase beta subunit (689 aa).

This sequence belongs to the class-II aminoacyl-tRNA synthetase family. Tetramer of two alpha and two beta subunits.

It localises to the cytoplasm. The enzyme catalyses tRNA(Gly) + glycine + ATP = glycyl-tRNA(Gly) + AMP + diphosphate. This is Glycine--tRNA ligase beta subunit from Desulforapulum autotrophicum (strain ATCC 43914 / DSM 3382 / VKM B-1955 / HRM2) (Desulfobacterium autotrophicum).